Reading from the N-terminus, the 265-residue chain is NADH dehydrogenase [ubiquinone] iron-sulfur protein 3, mitochondrial (265 aa).

A mitochondrion-targeting transit peptide spans 1–33 (MAALIRNLGARAAVAALSAKHVVPAAGSTALRM).

The protein belongs to the complex I 30 kDa subunit family. In terms of assembly, part of the mitochondrial membrane respiratory chain NADH dehydrogenase (Complex I). Interacts with sicily; interaction is stronger with unprocessed sicily protein.

The protein resides in the mitochondrion. The catalysed reaction is a ubiquinone + NADH + 5 H(+)(in) = a ubiquinol + NAD(+) + 4 H(+)(out). In terms of biological role, core subunit of the mitochondrial membrane respiratory chain NADH dehydrogenase (Complex I) that is believed to belong to the minimal assembly required for catalysis. Complex I functions in the transfer of electrons from NADH to the respiratory chain. The immediate electron acceptor for the enzyme is believed to be ubiquinone. This chain is NADH dehydrogenase [ubiquinone] iron-sulfur protein 3, mitochondrial, found in Drosophila melanogaster (Fruit fly).